Reading from the N-terminus, the 292-residue chain is Enoyl-CoA hydratase domain-containing protein 2, mitochondrial (292 aa).

The N-terminal 35 residues, 1–35 (MLRVLCLLRPWRPLRARGCASDGAAGGSEIQVRAL), are a transit peptide targeting the mitochondrion. Position 97 is an N6-acetyllysine; alternate (lysine 97). Lysine 97 carries the post-translational modification N6-succinyllysine; alternate.

This sequence belongs to the enoyl-CoA hydratase/isomerase family.

It localises to the mitochondrion. This Homo sapiens (Human) protein is Enoyl-CoA hydratase domain-containing protein 2, mitochondrial (ECHDC2).